Here is a 203-residue protein sequence, read N- to C-terminus: Protein GrpE (203 aa).

Positions 1–20 (MSDNGDNNTKSPQHNNPQPN) are enriched in polar residues. Residues 1 to 46 (MSDNGDNNTKSPQHNNPQPNEKSDGKVQPGQPQVNPQRKFTAGINK) form a disordered region.

It belongs to the GrpE family. Homodimer.

The protein localises to the cytoplasm. Its function is as follows. Participates actively in the response to hyperosmotic and heat shock by preventing the aggregation of stress-denatured proteins, in association with DnaK and GrpE. It is the nucleotide exchange factor for DnaK and may function as a thermosensor. Unfolded proteins bind initially to DnaJ; upon interaction with the DnaJ-bound protein, DnaK hydrolyzes its bound ATP, resulting in the formation of a stable complex. GrpE releases ADP from DnaK; ATP binding to DnaK triggers the release of the substrate protein, thus completing the reaction cycle. Several rounds of ATP-dependent interactions between DnaJ, DnaK and GrpE are required for fully efficient folding. This chain is Protein GrpE, found in Ehrlichia chaffeensis (strain ATCC CRL-10679 / Arkansas).